The following is a 90-amino-acid chain: Small ribosomal subunit protein uS15c (90 aa).

This sequence belongs to the universal ribosomal protein uS15 family. In terms of assembly, part of the 30S ribosomal subunit.

It is found in the plastid. Its subcellular location is the chloroplast. The polypeptide is Small ribosomal subunit protein uS15c (rps15) (Daucus carota (Wild carrot)).